We begin with the raw amino-acid sequence, 508 residues long: Photosystem II CP47 reaction center protein (508 aa).

A run of 6 helical transmembrane segments spans residues 21 to 36 (AVHI…WAGS), 101 to 115 (IVFS…IWHW), 140 to 156 (GIHL…FGAF), 203 to 218 (IAAG…FHLS), 237 to 252 (VLSS…AFVV), and 457 to 472 (TFAL…HGAR).

Belongs to the PsbB/PsbC family. PsbB subfamily. As to quaternary structure, PSII is composed of 1 copy each of membrane proteins PsbA, PsbB, PsbC, PsbD, PsbE, PsbF, PsbH, PsbI, PsbJ, PsbK, PsbL, PsbM, PsbT, PsbX, PsbY, PsbZ, Psb30/Ycf12, at least 3 peripheral proteins of the oxygen-evolving complex and a large number of cofactors. It forms dimeric complexes. Requires Binds multiple chlorophylls. PSII binds additional chlorophylls, carotenoids and specific lipids. as cofactor.

Its subcellular location is the plastid. The protein localises to the chloroplast thylakoid membrane. In terms of biological role, one of the components of the core complex of photosystem II (PSII). It binds chlorophyll and helps catalyze the primary light-induced photochemical processes of PSII. PSII is a light-driven water:plastoquinone oxidoreductase, using light energy to abstract electrons from H(2)O, generating O(2) and a proton gradient subsequently used for ATP formation. The protein is Photosystem II CP47 reaction center protein of Secale cereale (Rye).